A 277-amino-acid chain; its full sequence is B3 domain-containing protein At3g19184 (277 aa).

The interval glutamine 33 to arginine 94 is disordered. A DNA-binding region (TF-B3) is located at residues phenylalanine 130–asparagine 221. A compositionally biased stretch (acidic residues) spans alanine 224–glutamate 250. Residues alanine 224 to lysine 277 are disordered. Residues serine 251 to glutamine 264 are compositionally biased toward basic and acidic residues. The segment covering serine 268–lysine 277 has biased composition (basic residues).

It localises to the nucleus. The polypeptide is B3 domain-containing protein At3g19184 (Arabidopsis thaliana (Mouse-ear cress)).